A 162-amino-acid polypeptide reads, in one-letter code: Protein archease (162 aa).

Positions 34, 161, and 162 each coordinate Ca(2+).

It belongs to the archease family. As to quaternary structure, component of the tRNA-splicing ligase complex.

Its function is as follows. Component of the tRNA-splicing ligase complex required to facilitate the enzymatic turnover of catalytic subunit RTCB. Together with ddx1, acts by facilitating the guanylylation of RTCB, a key intermediate step in tRNA ligation. This Ictalurus punctatus (Channel catfish) protein is Protein archease.